Here is a 340-residue protein sequence, read N- to C-terminus: MLNKKIKKNHKEDWITELTNAITNPDELLRTLNLKSNTKYFKNIQVQKLFSLRVPKTFVSRMKKNDPFDPLLLQILPHTKELKNNHNFVQDPLEETKNVIIPGLIRKYNNRILLLLKTNCAINCRYCFRRYFPYSQHPGNKENLNLAIQYIKNQTDLNEVILSGGDPLMAKDHEIQWIVNTLSNIYHIKRLRIHTRLPIVIPSRITNNLCKILSTTRLKILIVTHINHAQEINHELQYNINKLHKLGITLLNQSVLLRGINDNAKILSQLSNKLFDINILPYYLHILDKVKSTTHFYVSEKQASIIVVELLSMISGFLVPKLVCEHPGKNSKIYINLNMK.

A Radical SAM core domain is found at 106–321; the sequence is RKYNNRILLL…SMISGFLVPK (216 aa). Residues Cys120, Cys124, and Cys127 each coordinate [4Fe-4S] cluster. N6-(pyridoxal phosphate)lysine is present on Lys332.

This sequence belongs to the radical SAM superfamily. KamA family. The cofactor is [4Fe-4S] cluster. It depends on pyridoxal 5'-phosphate as a cofactor.

The catalysed reaction is L-lysine = D-beta-lysine. With EpmA is involved in the beta-lysylation step of the post-translational modification of translation elongation factor P (EF-P) on 'Lys-34'. EpmB appears to act before EpmA. Displays lysine 2,3-aminomutase activity, producing (R)-beta-lysine from (S)-alpha-lysine (L-lysine). The sequence is that of L-lysine 2,3-aminomutase (epmB) from Buchnera aphidicola subsp. Baizongia pistaciae (strain Bp).